The chain runs to 264 residues: Thymidylate synthase (264 aa).

R21 serves as a coordination point for dUMP. H51 serves as a coordination point for (6R)-5,10-methylene-5,6,7,8-tetrahydrofolate. 126-127 serves as a coordination point for dUMP; the sequence is RR. C146 functions as the Nucleophile in the catalytic mechanism. DUMP contacts are provided by residues 166-169, N177, and 207-209; these read RSCD and HLY. D169 is a (6R)-5,10-methylene-5,6,7,8-tetrahydrofolate binding site. A263 is a binding site for (6R)-5,10-methylene-5,6,7,8-tetrahydrofolate.

It belongs to the thymidylate synthase family. Bacterial-type ThyA subfamily. Homodimer.

Its subcellular location is the cytoplasm. The enzyme catalyses dUMP + (6R)-5,10-methylene-5,6,7,8-tetrahydrofolate = 7,8-dihydrofolate + dTMP. The protein operates within pyrimidine metabolism; dTTP biosynthesis. Functionally, catalyzes the reductive methylation of 2'-deoxyuridine-5'-monophosphate (dUMP) to 2'-deoxythymidine-5'-monophosphate (dTMP) while utilizing 5,10-methylenetetrahydrofolate (mTHF) as the methyl donor and reductant in the reaction, yielding dihydrofolate (DHF) as a by-product. This enzymatic reaction provides an intracellular de novo source of dTMP, an essential precursor for DNA biosynthesis. In Hamiltonella defensa subsp. Acyrthosiphon pisum (strain 5AT), this protein is Thymidylate synthase.